The chain runs to 193 residues: 7-methyl-GTP pyrophosphatase (193 aa).

D70 serves as the catalytic Proton acceptor.

This sequence belongs to the Maf family. YceF subfamily. It depends on a divalent metal cation as a cofactor.

It localises to the cytoplasm. The enzyme catalyses N(7)-methyl-GTP + H2O = N(7)-methyl-GMP + diphosphate + H(+). Functionally, nucleoside triphosphate pyrophosphatase that hydrolyzes 7-methyl-GTP (m(7)GTP). May have a dual role in cell division arrest and in preventing the incorporation of modified nucleotides into cellular nucleic acids. The polypeptide is 7-methyl-GTP pyrophosphatase (Aliivibrio fischeri (strain ATCC 700601 / ES114) (Vibrio fischeri)).